A 67-amino-acid chain; its full sequence is Kappa-conotoxin-like Em11.8 (67 aa).

The signal sequence occupies residues 1-26 (MMFRLTSVSCFLLVIACLNLFQVVLT). 4 cysteine pairs are disulfide-bonded: C29–C43, C36–C48, C42–C51, and C47–C55. The residue at position 59 (F59) is a Phenylalanine amide. The propeptide occupies 63-67 (ATFQE).

The protein belongs to the conotoxin I2 superfamily. In terms of tissue distribution, expressed by the venom duct.

It localises to the secreted. Functionally, inhibits the vertebrate voltage-gated potassium channels Kv1.1/KCNA1 and Kv1.3/KCNA3. In Conus emaciatus (False virgin cone), this protein is Kappa-conotoxin-like Em11.8.